Reading from the N-terminus, the 122-residue chain is Vacuolar transporter chaperone complex subunit 1 (122 aa).

At 1-32 (MSTQPLLQTTPGKRIALPVRVEPKVFFANERT) the chain is on the cytoplasmic side. The chain crosses the membrane as a helical span at residues 33-53 (FLSWLSFAVVLGGLSVGLLNF). Topologically, residues 54 to 59 (GDRIGK) are vacuolar. A helical transmembrane segment spans residues 60–80 (ISAGLFTIVAIGTMGYALGIY). Over 81 to 101 (HWRASAIRRRGSGPYDDRLGP) the chain is Cytoplasmic. Residues 102–122 (TILCFVLLAAIITNFVLRMLF) form a helical membrane-spanning segment.

The protein belongs to the VTC1 family. As to quaternary structure, the VTC core complex is an integral membrane heterooligomer composed of at least the catalytic subunit vtc4 and the accessory subunits vtc1 and vtc2. vtc1 is a small membrane protein without hydrophilic domain. Vtc2 and vtc4 are related and have 2 hydrophilic domains that face the cytosol, an N-terminal SPX domain and the central core domain. The central core in vtc4 is the catalytic domain. Vtc1 interacts with GTP-bound Ras-like cdc42, which is subsequently inactivated.

It is found in the vacuole membrane. Accessory subunit of the vacuolar transporter chaperone (VTC) complex. The VTC complex acts as a vacuolar polyphosphate polymerase that catalyzes the synthesis of inorganic polyphosphate (polyP) via transfer of phosphate from ATP to a growing polyP chain, releasing ADP. VTC exposes its catalytic domain vtc4 to the cytosol, where the growing polyP chain winds through a tunnel-shaped pocket, integrating cytoplasmic polymer synthesis with polyP membrane translocation. The VTC complex carries 9 vacuolar transmembrane domains, which are likely to constitute the translocation channel into the organelle lumen. PolyP synthesis is tightly coupled to its transport into the vacuole lumen, in order to avoid otherwise toxic intermediates in the cytosol, and it depends on the proton gradient across the membrane, formed by V-ATPase. Vtc1 contributes only 3 transmembrane domains to the complex. The VTC complex also plays a role in vacuolar membrane fusion. Involved in the control of cell polarity. The protein is Vacuolar transporter chaperone complex subunit 1 of Schizosaccharomyces pombe (strain 972 / ATCC 24843) (Fission yeast).